A 447-amino-acid chain; its full sequence is GTPase Der (447 aa).

2 consecutive EngA-type G domains span residues 3-167 and 181-354; these read PVIA…FAER and TRIA…AAAM. GTP-binding positions include 9 to 16, 56 to 60, 119 to 122, 187 to 194, 234 to 238, and 299 to 302; these read GRPNVGKS, DTGGF, NKAE, DTAGL, and NKWD. The KH-like domain maps to 355 to 439; sequence VKLPTPKLTR…PLRIEFRTNK (85 aa).

The protein belongs to the TRAFAC class TrmE-Era-EngA-EngB-Septin-like GTPase superfamily. EngA (Der) GTPase family. In terms of assembly, associates with the 50S ribosomal subunit.

GTPase that plays an essential role in the late steps of ribosome biogenesis. This chain is GTPase Der, found in Ralstonia nicotianae (strain ATCC BAA-1114 / GMI1000) (Ralstonia solanacearum).